Reading from the N-terminus, the 603-residue chain is Aspartate--tRNA(Asp/Asn) ligase (603 aa).

L-aspartate is bound at residue Glu182. An aspartate region spans residues 206–209 (QLFK). Arg228 lines the L-aspartate pocket. ATP contacts are provided by residues 228-230 (RDE) and Gln237. Position 454 (His454) interacts with L-aspartate. Position 500 (Glu500) interacts with ATP. L-aspartate is bound at residue Arg507. 552–555 (GLDR) serves as a coordination point for ATP.

This sequence belongs to the class-II aminoacyl-tRNA synthetase family. Type 1 subfamily. Homodimer.

The protein resides in the cytoplasm. It carries out the reaction tRNA(Asx) + L-aspartate + ATP = L-aspartyl-tRNA(Asx) + AMP + diphosphate. Aspartyl-tRNA synthetase with relaxed tRNA specificity since it is able to aspartylate not only its cognate tRNA(Asp) but also tRNA(Asn). Reaction proceeds in two steps: L-aspartate is first activated by ATP to form Asp-AMP and then transferred to the acceptor end of tRNA(Asp/Asn). In Aquifex aeolicus (strain VF5), this protein is Aspartate--tRNA(Asp/Asn) ligase.